The chain runs to 348 residues: Phosphate acyltransferase (348 aa).

This sequence belongs to the PlsX family. In terms of assembly, homodimer. Probably interacts with PlsY.

The protein resides in the cytoplasm. It carries out the reaction a fatty acyl-[ACP] + phosphate = an acyl phosphate + holo-[ACP]. The protein operates within lipid metabolism; phospholipid metabolism. Catalyzes the reversible formation of acyl-phosphate (acyl-PO(4)) from acyl-[acyl-carrier-protein] (acyl-ACP). This enzyme utilizes acyl-ACP as fatty acyl donor, but not acyl-CoA. The protein is Phosphate acyltransferase of Rhizobium rhizogenes (strain K84 / ATCC BAA-868) (Agrobacterium radiobacter).